We begin with the raw amino-acid sequence, 292 residues long: Hydroxysqualene synthase (292 aa).

The protein belongs to the phytoene/squalene synthase family. HpnC subfamily.

It catalyses the reaction presqualene diphosphate + H2O = hydroxysqualene + diphosphate. It functions in the pathway secondary metabolite biosynthesis; hopanoid biosynthesis. Functionally, involved in the biosynthesis of the hopanoid precursor squalene (SQ) from farnesyl diphosphate (FPP). Catalyzes the second step, the conversion of presqualene diphosphate (PSPP) to hydroxysqualene (HSQ). The sequence is that of Hydroxysqualene synthase from Sinorhizobium fredii (strain NBRC 101917 / NGR234).